The primary structure comprises 247 residues: MEYHPDLENLDEDGYTQLHFDSRSNTRIAVVSEKGSCVASPPWRLIAVILGILCLVILVIAVVLGTMAIWRPNSGRNSLENGYFPSRNKENHSQPTQSPLEESVTPTKAVKTTGVLSSPCPPNWIIYEKSCYLFSPSLNSWDQSKRQCSQLGSNLIKIDSSKELGFIVKQVSSQPDNSFWIGLSRPQTEVPWLWEDGSTFSSNLFQIRTTATQENPSPNCVWIHVSVIYDQLCSVPSCSICEKKFSM.

Topologically, residues 1 to 44 (MEYHPDLENLDEDGYTQLHFDSRSNTRIAVVSEKGSCVASPPWR) are cytoplasmic. Residues 15–18 (YTQL) carry the ITAM-like motif. The helical; Signal-anchor for type II membrane protein transmembrane segment at 45–65 (LIAVILGILCLVILVIAVVLG) threads the bilayer. Residues 66–247 (TMAIWRPNSG…CSICEKKFSM (182 aa)) lie on the Extracellular side of the membrane. Residues 81–105 (NGYFPSRNKENHSQPTQSPLEESVT) are disordered. A glycan (N-linked (GlcNAc...) asparagine) is linked at asparagine 91. The span at 93–105 (SQPTQSPLEESVT) shows a compositional bias: polar residues. 3 cysteine pairs are disulfide-bonded: cysteine 120–cysteine 131, cysteine 148–cysteine 241, and cysteine 220–cysteine 233. A C-type lectin domain is found at 127-242 (YEKSCYLFSP…CSVPSCSICE (116 aa)). (1,3-beta-D-glucosyl)n is bound at residue 146–153 (RQCSQLGS). Residues lysine 157, aspartate 159, and glutamate 163 each coordinate a divalent metal cation. Glutamate 195 is a (1,3-beta-D-glucosyl)n binding site. Glutamate 242 contacts a divalent metal cation.

Homodimer. Interacts with SYK; participates in leukocyte activation in presence of fungal pathogens. Interacts with CD37; this interaction controls CLEC7A-mediated IL-6 production. In terms of processing, phosphorylated on tyrosine residues in response to beta-glucan binding. Detected in dendritic cells, in paracortical and medullary regions of lymph nodes, and in spleen red pulp and white pulp.

Its subcellular location is the cell membrane. Functionally, lectin that functions as a pattern recognizing receptor (PRR) specific for beta-1,3-linked and beta-1,6-linked glucans, which constitute cell wall constituents from pathogenic bacteria and fungi. Necessary for the TLR2-mediated inflammatory response and activation of NF-kappa-B: upon beta-glucan binding, recruits SYK via its ITAM motif and promotes a signaling cascade that activates some CARD domain-BCL10-MALT1 (CBM) signalosomes, leading to the activation of NF-kappa-B and MAP kinase p38 (MAPK11, MAPK12, MAPK13 and/or MAPK14) pathways which stimulate expression of genes encoding pro-inflammatory cytokines and chemokines. Enhances cytokine production in macrophages and dendritic cells. Mediates production of reactive oxygen species in the cell. Mediates phagocytosis of C.albicans conidia. Binds T-cells in a way that does not involve their surface glycans and plays a role in T-cell activation. Stimulates T-cell proliferation. Induces phosphorylation of SCIMP after binding beta-glucans. The polypeptide is C-type lectin domain family 7 member A (CLEC7A) (Macaca mulatta (Rhesus macaque)).